The following is a 486-amino-acid chain: NADH-quinone oxidoreductase subunit N (486 aa).

The next 14 helical transmembrane spans lie at 8 to 28 (LTAL…ILSI), 36 to 56 (FVAV…YFLI), 74 to 94 (ILYI…SYPW), 104 to 124 (EFYL…ISHH), 125 to 145 (MASF…LIAY), 160 to 180 (IILS…VYSI), 201 to 221 (ILVV…KLSI), 239 to 259 (VLSF…LNFL), 269 to 289 (VIYF…NLMA), 298 to 318 (FLGY…LVSH), 329 to 349 (AIYL…VNLI), 376 to 396 (SVLT…GFIG), 410 to 432 (WLIG…RIIL), and 459 to 479 (IVIC…NPLI).

Belongs to the complex I subunit 2 family. NDH-1 is composed of 13 different subunits. Subunits NuoA, H, J, K, L, M, N constitute the membrane sector of the complex.

It is found in the cell membrane. It carries out the reaction a quinone + NADH + 5 H(+)(in) = a quinol + NAD(+) + 4 H(+)(out). Functionally, NDH-1 shuttles electrons from NADH, via FMN and iron-sulfur (Fe-S) centers, to quinones in the respiratory chain. The immediate electron acceptor for the enzyme in this species is believed to be ubiquinone. Couples the redox reaction to proton translocation (for every two electrons transferred, four hydrogen ions are translocated across the cytoplasmic membrane), and thus conserves the redox energy in a proton gradient. This is NADH-quinone oxidoreductase subunit N from Buchnera aphidicola subsp. Acyrthosiphon pisum (strain APS) (Acyrthosiphon pisum symbiotic bacterium).